Reading from the N-terminus, the 577-residue chain is Arginine--tRNA ligase (577 aa).

Positions 122 to 132 match the 'HIGH' region motif; it reads PNVAKEMHVGH.

The protein belongs to the class-I aminoacyl-tRNA synthetase family. In terms of assembly, monomer.

The protein localises to the cytoplasm. The enzyme catalyses tRNA(Arg) + L-arginine + ATP = L-arginyl-tRNA(Arg) + AMP + diphosphate. The protein is Arginine--tRNA ligase of Vibrio vulnificus (strain YJ016).